The sequence spans 233 residues: MPSTDSIPKSNFDAIPDVIQAFKNGEFVVVLDDPSRENEADLIIAAESVTTEQMAFMVRHSSGLICAPLTPERTTALDLPQMVTHNADPRGTAYTVSVDAEHPSTTTGISAHDRALACRMLAAPDAQPSHFRRPGHVFPLRAVAGGVRARRGHTEAGVELCRLAGKRPVAVISEIVDDGQEVEGRAVRAAPGMLRGDECVAFARRWGLKVCTIEDMIAHVEKTEGKLETNGSG.

Residue Glu37 coordinates Mg(2+). Position 37 (Glu37) interacts with Mn(2+). A D-ribulose 5-phosphate-binding site is contributed by Asp41. An S-glutathionyl cysteine modification is found at Cys66. D-ribulose 5-phosphate-binding positions include Thr92 and 150–154; that span reads RRGHT. Residue His153 coordinates Mg(2+). His153 contributes to the Mn(2+) binding site.

Homodimer. Requires Mg(2+) as cofactor. The cofactor is Mn(2+). S-glutathionylation is reversible and dependent on a glutaredoxin.

The enzyme catalyses D-ribulose 5-phosphate = (2S)-2-hydroxy-3-oxobutyl phosphate + formate + H(+). It functions in the pathway cofactor biosynthesis; riboflavin biosynthesis; 2-hydroxy-3-oxobutyl phosphate from D-ribulose 5-phosphate: step 1/1. Functionally, catalyzes the conversion of D-ribulose 5-phosphate to formate and 3,4-dihydroxy-2-butanone 4-phosphate. The polypeptide is 3,4-dihydroxy-2-butanone 4-phosphate synthase (RIB3) (Pyricularia oryzae (strain 70-15 / ATCC MYA-4617 / FGSC 8958) (Rice blast fungus)).